The primary structure comprises 489 residues: Argininosuccinate lyase (489 aa).

The segment at 462–489 (QARYQQTEPAEEPPLPPSSPGSGLPLES) is disordered.

This sequence belongs to the lyase 1 family. Argininosuccinate lyase subfamily.

It localises to the cytoplasm. It catalyses the reaction 2-(N(omega)-L-arginino)succinate = fumarate + L-arginine. Its pathway is amino-acid biosynthesis; L-arginine biosynthesis; L-arginine from L-ornithine and carbamoyl phosphate: step 3/3. This chain is Argininosuccinate lyase, found in Synechococcus sp. (strain JA-3-3Ab) (Cyanobacteria bacterium Yellowstone A-Prime).